A 2016-amino-acid chain; its full sequence is Cell adhesion molecule Dscam1 (2016 aa).

An N-terminal signal peptide occupies residues 1–28 (MNMPNERLKWLMLFAAVALIACGSQTLA). Topologically, residues 29-1618 (ANPPDADQKG…TIRIILSNLN (1590 aa)) are extracellular. 9 Ig-like C2-type domains span residues 39 to 134 (PVFL…VHVR), 138 to 230 (AQYY…TRLS), 247 to 338 (PKIN…TVLT), 342 to 421 (PLSA…AELK), 428 to 522 (PPVI…AKLN), 527 to 613 (PYIR…LEVQ), 618 to 712 (PQVL…LQVN), 715 to 807 (PRWI…IMIS), and 812 to 904 (PEFT…ASIN). The N-linked (GlcNAc...) asparagine glycan is linked to Asn-53. Cys-61 and Cys-117 are disulfide-bonded. 3 residues coordinate Zn(2+): Asp-144, Asn-146, and Leu-161. 13 disulfides stabilise this stretch: Cys-160–Cys-217, Cys-160–Thr-219, Cys-160–Lys-220, Cys-269–Cys-322, Pro-270–Val-323, Ala-276–Gly-329, Cys-364–Cys-405, Cys-450–Cys-506, Cys-547–Cys-596, Cys-640–Cys-694, Val-641–Cys-694, Val-641–Ile-695, and Cys-736–Cys-790. Asn-325 is a glycosylation site (N-linked (GlcNAc...) asparagine). Asn-492 and Asn-577 each carry an N-linked (GlcNAc...) asparagine glycan. Asn-820 carries N-linked (GlcNAc...) asparagine glycosylation. Cys-833 and Cys-890 form a disulfide bridge. Fibronectin type-III domains follow at residues 913-1007 (MPYA…TAEE), 1012-1116 (KPQN…TPSQ), 1117-1213 (PPSD…TEPD), and 1217-1310 (APTD…PSDQ). N-linked (GlcNAc...) asparagine glycosylation is found at Asn-1022, Asn-1055, and Asn-1186. The region spanning 1312-1394 (PAKIASFDDT…ENSIAKDSIT (83 aa)) is the Ig-like C2-type 10 domain. Cysteines 1334 and 1382 form a disulfide. Fibronectin type-III domains are found at residues 1402–1495 (PPQS…TKGQ) and 1499–1594 (LPEK…TGGT). The helical transmembrane segment at 1619–1639 (LVVPVVAALLVIIIAIIVICI) threads the bilayer. Over 1640–2016 (LRSKGNHHKD…GFTAYDTMAV (377 aa)) the chain is Cytoplasmic. A PXXP motif 1; SH3-binding motif is present at residues 1685–1688 (PPVP). Positions 1688-1719 (PGSNYNTCDRIKRGRGGLRSNHSTWDPRRNPN) are disordered. The PXXP motif 2; SH3-binding motif lies at 1727–1730 (PPVP). 2 disordered regions span residues 1787–1846 (GHAG…DDPA) and 1862–2016 (SQGG…TMAV). The segment covering 1826-1836 (KNSQGGQSSIY) has biased composition (polar residues). The YXXP motif 1; potential SH2-binding signature appears at 1842–1845 (YDDP). The short motif at 1875-1878 (YDDP) is the YXXP motif 2; potential SH2-binding element. Residues 1897-1918 (GQPYDHYGSRGSMGRRSIGSAR) are compositionally biased toward low complexity. The Polyproline tract (probable SH3-binding) motif lies at 1925–1932 (PEPPPPPP). Basic and acidic residues-rich tracts occupy residues 1944 to 1962 (DSKE…DHGP) and 1974 to 1993 (QPKD…RNET). Residues 1994-2004 (GPKQLQLQQAN) are compositionally biased toward polar residues.

Homodimer (via extracellular region); alternative splicing produces a potential 19,008 different ectodomains and the majority of these show strong isoform-specific homodimerization. Interacts (via cytoplasmic domain) with dock/dreadlocks (via SH2 and SH3 domains); the interaction is direct and may require Dscam1 to be phosphorylated. Phosphorylated on tyrosine residues in the intracellular domain. Tyrosine protein kinase Src42A and possibly Src64B are involved in this phosphorylation. In terms of processing, glycosylation on Asn-53 and Asn-325 is involved in stabilizing dimerization. Post-translationally, proteolytically processed, probably to generate a secreted form. As to expression, secreted into the hemolymph (at protein level). Expressed in brain and eye-antennal imaginal disks, including R3/R4 and R7 photoreceptor cells. Individual R3/R4 cells express between 14 and 50 randomly generated mRNAs encoding distinct isoforms.

It localises to the cell membrane. It is found in the cell projection. Its subcellular location is the neuron projection. The protein resides in the axon. The protein localises to the perikaryon. It localises to the dendrite. It is found in the secreted. Its function is as follows. Cell surface receptor involved in guidance and targeting of growing nerve axons. Required during Bolwig's organ differentiation for accurate and efficient targeting of photoreceptor neuron axons to their synaptic targets in the brain via the P2 intermediate target neuron. Involved in isoneural self-avoidance during dendrite arborization but not in heteroneural recognition and repulsion during tiling by related neurons of the same class. Involved in regulating axon bifurcation and divergent extension in the developing mushroom body. Essential for axon arborisation in ellipsoid body. Exhibits an extraordinary level of molecular diversity resulting from alternative splicing. Isoforms differing in their ectodomain makeup show a high degree of functional redundancy while isoforms with different transmembrane domains are involved in different neuronal morphogenetic processes and are differentially targeted to dendrites or axons. The vast majority of isoforms exhibit strong isoform-specific homophilic binding. Individual cells express a distinct randomly generated repertoire of isoforms. Cell surfaces bearing identical repertoires of Dscam1 isoforms, such as those from the same cell, trigger recognition and avoidance. A subset of isoforms is expressed in fat body cells and hemocytes, cells that are part of the insect immune response, and these isoforms are secreted into the hemolymph. The secreted form comprising the ectodomain can bind to bacteria, such as Escherichia coli, and may act as an opsonin enhancing their phagocytosis by hemocytes. This Drosophila melanogaster (Fruit fly) protein is Cell adhesion molecule Dscam1.